Consider the following 679-residue polypeptide: Methyl-accepting chemotaxis protein McpB (679 aa).

3 divergent domain HAMP regions span residues 8-56 (AVAQ…RQLR), 63-112 (QQVE…AAHI), and 111-156 (HIAV…ERLR). The PAS domain occupies 171–213 (YNARIKSALDNVSANVMIADNDLNIIYMNRTVSEMLGRAEADI). A heme-binding site is contributed by histidine 234. The DxT. Important for signal propagation motif lies at 285 to 287 (DRT). Residues 289–332 (EHRAEQEVSQLVQAAAAGDFSKRVEEAGKEGFFLRLAKDLNSLV) form a divergent domain HAMP 4 region. In terms of domain architecture, HAMP 5 spans 333–385 (DTADRGLRDVSRMLGALAQGDLTQRIEADYQGTFGQLKDFSNDTAQSLSRMLG). One can recognise a Methyl-accepting transducer domain in the interval 390 to 619 (AADTINTAAS…EAAAAAEAMQ (230 aa)). Disordered stretches follow at residues 405–425 (NAEL…TASS) and 644–679 (ASAR…WEEF). The span at 411–425 (RTEQQASSLEETASS) shows a compositional bias: polar residues. The segment covering 670-679 (ARKEDGWEEF) has biased composition (basic and acidic residues). The GWEEF pentapeptide. Important for methylation by CheR2 motif lies at 675–679 (GWEEF).

Belongs to the methyl-accepting chemotaxis (MCP) protein family. Homodimer. The PAS domains form dimers in the presence and absence of oxygen. Interacts with the methyltransferase CheR2 via the C-terminal McpB pentapeptide GWEEF. Interacts with the methylesterase/gutaminase CheB2, which also binds to the GWEEF pentapeptide. Post-translationally, methylated by CheR2, but not by CheR1, CheR3 or WspC. Demethylated by CheB2. In vitro, can be methylated by E.coli CheR.

Its subcellular location is the cytoplasm. In terms of biological role, chemoreceptor that plays a critical role in the virulence and pathogenesis of P.aeruginosa in a variety of hosts. Probably acts through oxygen sensing. Uses a heme-based sensor. Could be involved in chemotaxis. When expressed in E.coli, is able to sense and mediate repellent responses to oxygen, carbon monoxide and nitric oxide. In Pseudomonas aeruginosa (strain ATCC 15692 / DSM 22644 / CIP 104116 / JCM 14847 / LMG 12228 / 1C / PRS 101 / PAO1), this protein is Methyl-accepting chemotaxis protein McpB.